The following is a 208-amino-acid chain: Flavin-dependent thymidylate synthase (208 aa).

Residues 1-208 (MEVICKHYTP…QYLFEDCLKH (208 aa)) form the ThyX domain. FAD contacts are provided by residues S50 and 74–76 (RHR). Residues 71 to 74 (ELSR), 84 to 86 (SSR), and K147 each bind dUMP. The ThyX motif motif lies at 74-84 (RHRIASLSVKS). Residues 163–165 (NAR) and N169 contribute to the FAD site. R174 contributes to the dUMP binding site. Catalysis depends on R174, which acts as the Involved in ionization of N3 of dUMP, leading to its activation.

It belongs to the thymidylate synthase ThyX family. In terms of assembly, homotetramer. The cofactor is FAD.

It carries out the reaction dUMP + (6R)-5,10-methylene-5,6,7,8-tetrahydrofolate + NADPH + H(+) = dTMP + (6S)-5,6,7,8-tetrahydrofolate + NADP(+). It functions in the pathway pyrimidine metabolism; dTTP biosynthesis. Its function is as follows. Catalyzes the reductive methylation of 2'-deoxyuridine-5'-monophosphate (dUMP) to 2'-deoxythymidine-5'-monophosphate (dTMP) while utilizing 5,10-methylenetetrahydrofolate (mTHF) as the methyl donor, and NADPH and FADH(2) as the reductant. The polypeptide is Flavin-dependent thymidylate synthase (Helicobacter pylori (strain J99 / ATCC 700824) (Campylobacter pylori J99)).